The chain runs to 451 residues: Cobyrinate a,c-diamide synthase (451 aa).

The GATase cobBQ-type domain occupies 246–437; that stretch reads KIGVAYDEVF…VHTHVAAMPN (192 aa). The active-site Nucleophile is cysteine 328.

It belongs to the CobB/CbiA family. Mg(2+) serves as cofactor.

It catalyses the reaction cob(II)yrinate + 2 L-glutamine + 2 ATP + 2 H2O = cob(II)yrinate a,c diamide + 2 L-glutamate + 2 ADP + 2 phosphate + 2 H(+). The enzyme catalyses Ni-sirohydrochlorin + 2 L-glutamine + 2 ATP + 2 H2O = Ni-sirohydrochlorin a,c-diamide + 2 L-glutamate + 2 ADP + 2 phosphate + 2 H(+). It participates in cofactor biosynthesis; adenosylcobalamin biosynthesis; cob(II)yrinate a,c-diamide from sirohydrochlorin (anaerobic route): step 10/10. In terms of biological role, catalyzes the ATP-dependent amidation of the two carboxylate groups at positions a and c of cobyrinate, using either L-glutamine or ammonia as the nitrogen source. Involved in the biosynthesis of the unique nickel-containing tetrapyrrole coenzyme F430, the prosthetic group of methyl-coenzyme M reductase (MCR), which plays a key role in methanogenesis and anaerobic methane oxidation. Catalyzes the ATP-dependent amidation of the two carboxylate groups at positions a and c of Ni-sirohydrochlorin, using L-glutamine or ammonia as the nitrogen source. This chain is Cobyrinate a,c-diamide synthase, found in Methanobrevibacter smithii (strain ATCC 35061 / DSM 861 / OCM 144 / PS).